Reading from the N-terminus, the 1966-residue chain is Probable serine/threonine-protein kinase vps15 (1966 aa).

The Protein kinase domain maps to 21–303 (IVFKKSLGNA…QYFSFAHQFI (283 aa)). Residues 27–35 (LGNARFLKT) and K49 contribute to the ATP site. Catalysis depends on D144, which acts as the Proton acceptor. The interval 362–407 (PILISNNNNNNNNNNNNNNNNNNNNNNNNNNNNNNNNNQTTTTTTN) is disordered. Residues 367–407 (NNNNNNNNNNNNNNNNNNNNNNNNNNNNNNNNNQTTTTTTN) are compositionally biased toward low complexity. HEAT repeat units follow at residues 558–596 (CRLQKIVPYIMSMISPEQPTLVRVEALRSLAKVLEMVQT), 604–642 (IFGQYILPSLSQLSHESTDEIIRIAFAEILPQLATTAKR), 717–754 (KTNESVLPLIITFLNDRDWQLRCAFFENIVAVCTVVGA), and 756–793 (SLESFIYPCILLALTDEEEFVTEKALSSLSELCSLGLL). 4 disordered regions span residues 916–937 (SFNSNGSGGGGNPNLVSSTGGS), 1036–1062 (SSSNNSNNNTLSSSTTSSNSTTPTNST), 1106–1130 (GGITTGGTTTTTLGRSSSPQLTGLN), and 1190–1263 (TSLS…NNMN). Composition is skewed to low complexity over residues 1106–1119 (GGITTGGTTTTTLG) and 1192–1263 (LSNS…NNMN). 4 WD repeats span residues 1460 to 1499 (EHKAAVNEIQVSSDNLFFATASNDGTVKIWDCQRMEKSVT), 1508 to 1547 (QQEGRITSISICEKTHSIASASDKGSIHVFRVGISGKQKN), 1564 to 1605 (TTRG…DAFN), and 1610 to 1649 (ASLGLIQAFLIDPNRNWLVTGTSRGFLTCWDLRFGIPLYS). The disordered stretch occupies residues 1699-1743 (RSYEQPPQQQPQQPQPPQQQQQQQSQMNRSINMTSSTTTTTTSSY). 2 stretches are compositionally biased toward low complexity: residues 1703 to 1722 (QPPQQQPQQPQPPQQQQQQQ) and 1732 to 1742 (TSSTTTTTTSS). WD repeat units lie at residues 1790 to 1829 (KPTPLVRALLNPPNCPFLITAGDDKRIKLWDWNNLPQSYY) and 1935 to 1966 (HHQEPILDIKMMEVPNPMLISASTDGVVKVWK).

This sequence belongs to the protein kinase superfamily. Ser/Thr protein kinase family.

It catalyses the reaction L-seryl-[protein] + ATP = O-phospho-L-seryl-[protein] + ADP + H(+). The catalysed reaction is L-threonyl-[protein] + ATP = O-phospho-L-threonyl-[protein] + ADP + H(+). The protein is Probable serine/threonine-protein kinase vps15 (vps15) of Dictyostelium discoideum (Social amoeba).